A 1220-amino-acid chain; its full sequence is DNA-directed RNA polymerase subunit beta' (1220 aa).

Residues Cys-60, Cys-62, Cys-75, and Cys-78 each contribute to the Zn(2+) site. Asp-449, Asp-451, and Asp-453 together coordinate Mg(2+). Cys-818, Cys-892, Cys-899, and Cys-902 together coordinate Zn(2+).

It belongs to the RNA polymerase beta' chain family. In terms of assembly, the RNAP catalytic core consists of 2 alpha, 1 beta, 1 beta' and 1 omega subunit. When a sigma factor is associated with the core the holoenzyme is formed, which can initiate transcription. Mg(2+) serves as cofactor. Requires Zn(2+) as cofactor.

The enzyme catalyses RNA(n) + a ribonucleoside 5'-triphosphate = RNA(n+1) + diphosphate. In terms of biological role, DNA-dependent RNA polymerase catalyzes the transcription of DNA into RNA using the four ribonucleoside triphosphates as substrates. The chain is DNA-directed RNA polymerase subunit beta' from Lacticaseibacillus casei (strain BL23) (Lactobacillus casei).